The sequence spans 687 residues: Putative ammonium transporter 3 (687 aa).

Transmembrane regions (helical) follow at residues 39-59, 77-97, 134-154, 162-182, 196-216, 240-260, 272-292, 299-319, 323-343, 352-372, and 404-424; these read AVWI…FGLL, VVDV…FSYG, ASFL…SGAV, SYIL…HWVW, FAGC…ATVF, LGTF…VWGI, AVAT…ISFV, VNFL…ICAV, WHAL…LPLL, VGIV…VGIF, and CTAA…FLIS. Disordered stretches follow at residues 521-544, 549-568, and 592-687; these read RTNA…FNNQ, AVSS…RRTE, and PPEE…NPPV. The span at 549–564 shows a compositional bias: polar residues; the sequence is AVSSTVSTARNGPSTG. Composition is skewed to low complexity over residues 614-632 and 648-665; these read SPSS…SPSI and STAS…KNST.

It belongs to the ammonia transporter channel (TC 1.A.11.2) family.

The protein localises to the membrane. Functionally, involved in the uptake of ammonia. The chain is Putative ammonium transporter 3 (amt-3) from Caenorhabditis elegans.